Here is a 410-residue protein sequence, read N- to C-terminus: Cytochrome P450(MEG) (410 aa).

Cys355 lines the heme pocket.

It belongs to the cytochrome P450 family. The cofactor is heme.

Its subcellular location is the cytoplasm. It catalyses the reaction reduced 2[4Fe-4S]-[ferredoxin] + progesterone + O2 + 2 H(+) = 15beta-hydroxyprogesterone + oxidized 2[4Fe-4S]-[ferredoxin] + H2O. Functionally, has the capacity to hydroxylate certain steroids in the 15-beta position. Also hydroxylates progesterone in the 11-alpha and 9-beta position. This is Cytochrome P450(MEG) (cyp106A2) from Priestia megaterium (Bacillus megaterium).